We begin with the raw amino-acid sequence, 324 residues long: Cathepsin L-like proteinase (324 aa).

A signal peptide spans 1–16 (MKLIIALAALIVVINA). Intrachain disulfides connect cysteine 131–cysteine 174, cysteine 165–cysteine 206, and cysteine 263–cysteine 312. Cysteine 134 is a catalytic residue. Catalysis depends on residues histidine 270 and asparagine 290.

The protein belongs to the peptidase C1 family. In terms of tissue distribution, expressed in larval carcasses and gut, and adult gut.

This Phaedon cochleariae (Mustard beetle) protein is Cathepsin L-like proteinase.